A 161-amino-acid chain; its full sequence is Anaerobic nitrite reductase Glb1-1 (161 aa).

The 150-residue stretch at 8-157 folds into the Globin domain; it reads CFTEEQEALV…LVGAIKSEMK (150 aa). The short motif at 41-45 is the Homodimerization element; sequence EIAPS. The heme b site is built by Ser51, Lys65, His69, Lys99, Thr103, and His104. The Homodimerization signature appears at 111–123; sequence NEHFEVTKFALLD.

Belongs to the plant globin family. Homodimer. It depends on heme b as a cofactor. As to expression, mainly expressed in root nodules, and, to a lower extent, in leaves, roots, stems, flowers and fruits. Accumulates in mature root nodules.

The enzyme catalyses Fe(III)-heme b-[protein] + nitric oxide + H2O = Fe(II)-heme b-[protein] + nitrite + 2 H(+). Functionally, phytoglobin that reduces nitrite to nitric oxide (NO) under anoxic conditions (e.g. during flooding or in waterlogged soil) and upon root nodulation. Required for general plant development and during nodulation, especially for the onset of symbiosis. Monitors nitric oxide (NO) levels during early phase of the nitrogen-fixing symbiosis and buffers oxygen in functioning nodules. May not function as an oxygen storage or transport protein. Has an unusually high affinity for O(2) through a hexacoordinate heme iron because of a very low dissociation constant. This Lotus japonicus (Lotus corniculatus var. japonicus) protein is Anaerobic nitrite reductase Glb1-1.